We begin with the raw amino-acid sequence, 815 residues long: Minichromosome loss protein 1 (815 aa).

5 WD repeats span residues 11-50 (AHTDGLTRLAYTRDGKFLLTVGSNQVIRKFQVGSDEEPDS), 53-90 (NHQDPITGIAVAENYFCTCSEDATVCVYPIDSPTEHTL), 93-132 (RTTLPIRDVAYSVDGNWIAIASDETAVKVVSSTDSSQIFS), 135-174 (PAKASNKHVTYSPNGNFLAVSSCNGILYFYDTQTRELIKF), and 228-267 (ENHSGVTDISWSSNGMYIAASFKKGGILIWDTQSHEVVVE). Residues 306–362 (LKEENDPTKPLTSSKSKNRTSKELDDLFGSDDEQSQNVNDLDGNSANEENEFINHDG) are disordered. Residues 340-352 (SQNVNDLDGNSAN) show a composition bias toward polar residues. Residues 517-553 (ENESPVTISLSSSVVLVCTSAGYVRVFSRQGFPISIH) form a WD 6 repeat.

As to quaternary structure, interacts with pof3 and pol1.

Its subcellular location is the nucleus. The protein resides in the chromosome. Has a role in regulating DNA replication complexes. Acts as a regulator of post DNA replication initiation. Associates with chromatin during G1 and S phases of mitosis. Required for the transcriptional repression of the outer repeats of the centromeric region. Acts as a polymerase alpha replication accessory factor and is important for S-phase DNA damage survival. Plays a role in lagging-strand synthesis and Ozaki fragment processing, in addition to DNA repair. This is Minichromosome loss protein 1 (mcl1) from Schizosaccharomyces pombe (strain 972 / ATCC 24843) (Fission yeast).